The following is a 608-amino-acid chain: Granule-bound starch synthase 1, chloroplastic/amyloplastic (608 aa).

The N-terminal 78 residues, 1-78 (MATVIAAHFV…NGRPAAKIIC (78 aa)), are a transit peptide targeting the chloroplast. Residue Lys96 coordinates ADP-alpha-D-glucose. The disordered stretch occupies residues 587–608 (GSEPGTEGEEIAPLAKENVPTP).

This sequence belongs to the glycosyltransferase 1 family. Bacterial/plant glycogen synthase subfamily. As to expression, synthesized in a number of different organs, but most abundantly in tubers.

It localises to the plastid. It is found in the chloroplast. Its subcellular location is the amyloplast. The enzyme catalyses an NDP-alpha-D-glucose + [(1-&gt;4)-alpha-D-glucosyl](n) = [(1-&gt;4)-alpha-D-glucosyl](n+1) + a ribonucleoside 5'-diphosphate + H(+). It functions in the pathway glycan biosynthesis; starch biosynthesis. Responsible for the synthesis of amylose in reserve starch. This chain is Granule-bound starch synthase 1, chloroplastic/amyloplastic (WAXY), found in Manihot esculenta (Cassava).